The chain runs to 372 residues: Ligninase B (372 aa).

Residues 1–21 (MAFKQLFAAISLALSLSAANA) form the signal peptide. Residues 22-28 (AAVIEKR) constitute a propeptide that is removed on maturation. Intrachain disulfides connect C31/C43, C42/C313, C62/C148, and C277/C345. The active-site Proton acceptor is the H75. 4 residues coordinate Ca(2+): D76, G94, D96, and S98. Heme b is bound at residue H204. The Ca(2+) site is built by S205, D222, T224, I227, and D229. An N-linked (GlcNAc...) asparagine glycan is attached at N285. The span at 350–361 (FPTLTTLPGPET) shows a compositional bias: low complexity. The interval 350 to 372 (FPTLTTLPGPETSVQRIPPPPGA) is disordered.

The protein belongs to the peroxidase family. Ligninase subfamily. Heme b is required as a cofactor. Requires Ca(2+) as cofactor.

It catalyses the reaction 1-(3,4-dimethoxyphenyl)-2-(2-methoxyphenoxy)propane-1,3-diol + H2O2 = 3,4-dimethoxybenzaldehyde + guaiacol + glycolaldehyde + H2O. The enzyme catalyses 2 (3,4-dimethoxyphenyl)methanol + H2O2 = 2 (3,4-dimethoxyphenyl)methanol radical + 2 H2O. It participates in secondary metabolite metabolism; lignin degradation. Functionally, depolymerization of lignin. Catalyzes the C(alpha)-C(beta) cleavage of the propyl side chains of lignin. This is Ligninase B (LIPB) from Phanerodontia chrysosporium (White-rot fungus).